The chain runs to 242 residues: Large ribosomal subunit protein uL1 (242 aa).

Belongs to the universal ribosomal protein uL1 family. In terms of assembly, part of the 50S ribosomal subunit.

Binds directly to 23S rRNA. The L1 stalk is quite mobile in the ribosome, and is involved in E site tRNA release. Functionally, protein L1 is also a translational repressor protein, it controls the translation of the L11 operon by binding to its mRNA. The chain is Large ribosomal subunit protein uL1 from Dictyoglomus turgidum (strain DSM 6724 / Z-1310).